The primary structure comprises 43 residues: ORF7b protein (43 aa).

The chain crosses the membrane as a helical span at residues 9–29 (FYLCFLAFLLFLVLIMLIIFW).

It localises to the host Golgi apparatus membrane. It is found in the host endosome membrane. The chain is ORF7b protein from Homo sapiens (Human).